The following is a 349-amino-acid chain: DNA polymerase IV (349 aa).

One can recognise a UmuC domain in the interval 7-188 (IIHIDMDYFF…LPVKKLFGVG (182 aa)). Mg(2+) contacts are provided by Asp-11 and Asp-106. Glu-107 is a catalytic residue.

This sequence belongs to the DNA polymerase type-Y family. In terms of assembly, monomer. Mg(2+) is required as a cofactor.

Its subcellular location is the cytoplasm. It carries out the reaction DNA(n) + a 2'-deoxyribonucleoside 5'-triphosphate = DNA(n+1) + diphosphate. Its function is as follows. Poorly processive, error-prone DNA polymerase involved in untargeted mutagenesis. Copies undamaged DNA at stalled replication forks, which arise in vivo from mismatched or misaligned primer ends. These misaligned primers can be extended by PolIV. Exhibits no 3'-5' exonuclease (proofreading) activity. May be involved in translesional synthesis, in conjunction with the beta clamp from PolIII. This is DNA polymerase IV from Francisella tularensis subsp. holarctica (strain FTNF002-00 / FTA).